The following is a 550-amino-acid chain: Alkaline phosphatase PhoV (550 aa).

Positions 1–20 are cleaved as a signal peptide; that stretch reads MKIKLLCISLAVLFCSSANA. Zn(2+)-binding residues include aspartate 48 and threonine 89. Threonine 89 functions as the Phosphothreonine intermediate in the catalytic mechanism. Substrate-binding positions include asparagine 110 and 171–173; that span reads KDR. Aspartate 313, histidine 317, aspartate 360, histidine 361, and histidine 491 together coordinate Zn(2+).

It depends on Zn(2+) as a cofactor.

It is found in the cell inner membrane. The catalysed reaction is a phosphate monoester + H2O = an alcohol + phosphate. Its activity is regulated as follows. Subject to competitive inhibition by phosphate. Inhibited by manganese. Magnesium mildly increases enzyme activity when the zinc concentration is suboptimal. Optimal activity is dependent on the presence of 0.01-2% Triton X-100. Triton X-100 at a concentration of 0.05% increases the activity about fivefold relative to that in its absence. The enzyme is even active in Triton X-100 concentrations up to 80%. 50% inhibition by 4 mM EDTA and 50% inhibition by 48 mM sodium citrate. Its function is as follows. Alkaline phosphatase with broad substrate specificity. The sequence is that of Alkaline phosphatase PhoV from Synechococcus elongatus (strain ATCC 33912 / PCC 7942 / FACHB-805) (Anacystis nidulans R2).